The sequence spans 475 residues: Ataxin-10 (475 aa).

At R10 the chain carries Omega-N-methylarginine. S12 is subject to Phosphoserine; by AURKB. S77 carries the post-translational modification Phosphoserine; by PLK1. A Phosphothreonine; by PLK1 modification is found at T82. A Phosphoserine modification is found at S430.

Belongs to the ataxin-10 family. In terms of assembly, homooligomer. Interacts with GNB2. Interacts with IQCB1. Interacts with OGT. In terms of processing, polyubiquitinated. Post-translationally, phosphorylation at Ser-12 by AURKB promotes the association of ATXN10 with PLK1. Phosphorylation at Ser-77 and Thr-82 by PLK1 may play a role in the regulation of cytokinesis and may stimulate the proteasome-mediated degradation of ATXN10. Expressed in the central nervous system.

Its subcellular location is the cytoplasm. The protein resides in the perinuclear region. The protein localises to the midbody. It localises to the cytoskeleton. It is found in the cilium basal body. Its subcellular location is the microtubule organizing center. The protein resides in the centrosome. The protein localises to the centriole. Its function is as follows. May play a role in the regulation of cytokinesis. May play a role in signaling by stimulating protein glycosylation. Induces neuritogenesis by activating the Ras-MAP kinase pathway and is necessary for the survival of cerebellar neurons. Does not appear to play a major role in ciliogenesis. The polypeptide is Ataxin-10 (ATXN10) (Homo sapiens (Human)).